Here is a 670-residue protein sequence, read N- to C-terminus: Transcription factor Ken 2 (670 aa).

Residues 108-176 form the BTB domain; sequence TDLLLICDGK…LYSGQVYVRS (69 aa). 2 disordered regions span residues 200 to 288 and 307 to 470; these read SDGS…DRDR and NNHP…SDDA. The span at 218–230 shows a compositional bias: polar residues; sequence NRNTEGITGSSVV. Residues 325–338 show a composition bias toward basic residues; sequence HHLHHHHHHHHRQL. Gly residues-rich tracts occupy residues 351 to 368 and 389 to 400; these read GGGS…GESG and SGGGGAGSGRRS. The span at 407–419 shows a compositional bias: acidic residues; that stretch reads EPAEDDEDYELDV. Positions 451 to 464 are enriched in polar residues; that stretch reads SDPVNLSIVKQQQD. The C2H2-type 1; degenerate zinc-finger motif lies at 586 to 594; sequence NLKTHLRVH. C2H2-type zinc fingers lie at residues 600–623 and 636–658; these read FACR…CSVH and YTCC…LSGH.

It is found in the nucleus. Transcription factor required for terminalia development. Negative regulator of the JAK/STAT pathway: represses JAK/STAT-dependent expression of ventral veins lacking (vvl) in the posterior spiracles. In Culex quinquefasciatus (Southern house mosquito), this protein is Transcription factor Ken 2.